Consider the following 693-residue polypeptide: MSLAQEINRVVAPFEVISEFKPAGDQPAAIAELTERIKNGEKDVVLLGATGTGKSATTAWLIEQVQRPTLVMVQNKTLAAQLANEFRELLPNNAVEYFVSYYDYYQPEAYVAQTDTFIEKDSSVNEEVERLRHSATNALLTRRDVIVVATVSCIYGLGTPEEYIAGMVTLRKGAEMNRDDLLRKFVSMQYARNDMDFHRGTFRVRGDTVEIIPMYEELAIRIEFFGDEIENIHTLHPLTGEVIRDEEEMYVFPASHYVAGPERMSRAIKRIEDELAERLQVLESQNKLVEAQRLRMRTTYDLEMMQQMGFCNGIENYSSHIDGRARGTAPHCLLDYFPDDFLLVIDESHVTVPQIGAMYEGDMSRKRNLVDFGFRLPSAMDNRPLKWDEFQERVGQTVYLSATPGKYELGKSDGFVQQIIRPTGLIDPEVVVKPTKGQIDDLLGEIKTRTAKNERVLVTTLTKRMAEDLTDYLLGHGVKVEYLHSDVDTLRRVELLRELRMGVFDVLVGINLLREGLDLPEVSLVSILDADKEGFLRSSTSLIQTIGRAARNVSGQVHMYADRITDSMAHAIDETNRRRAIQVAYNTEHGIDPQPLRKKIADITDQLAKEDADTRELLAASGKTRGKGKGASTVRADGLAAAPAEDLVGLIEQLTEQMHAAAGELQFELAARLRDEVGELKKELRQMQAAGHA.

Residues 35–188 (ERIKNGEKDV…DDLLRKFVSM (154 aa)) enclose the Helicase ATP-binding domain. 48 to 55 (GATGTGKS) is a binding site for ATP. Positions 101-124 (YYDYYQPEAYVAQTDTFIEKDSSV) match the Beta-hairpin motif. The Helicase C-terminal domain occupies 438-604 (QIDDLLGEIK…PLRKKIADIT (167 aa)). A UVR domain is found at 648–683 (VGLIEQLTEQMHAAAGELQFELAARLRDEVGELKKE).

The protein belongs to the UvrB family. In terms of assembly, forms a heterotetramer with UvrA during the search for lesions. Interacts with UvrC in an incision complex.

The protein resides in the cytoplasm. Functionally, the UvrABC repair system catalyzes the recognition and processing of DNA lesions. A damage recognition complex composed of 2 UvrA and 2 UvrB subunits scans DNA for abnormalities. Upon binding of the UvrA(2)B(2) complex to a putative damaged site, the DNA wraps around one UvrB monomer. DNA wrap is dependent on ATP binding by UvrB and probably causes local melting of the DNA helix, facilitating insertion of UvrB beta-hairpin between the DNA strands. Then UvrB probes one DNA strand for the presence of a lesion. If a lesion is found the UvrA subunits dissociate and the UvrB-DNA preincision complex is formed. This complex is subsequently bound by UvrC and the second UvrB is released. If no lesion is found, the DNA wraps around the other UvrB subunit that will check the other stand for damage. The protein is UvrABC system protein B of Arthrobacter sp. (strain FB24).